Reading from the N-terminus, the 725-residue chain is Catalase-peroxidase (725 aa).

The tryptophyl-tyrosyl-methioninium (Trp-Tyr) (with M-253) cross-link spans 99-227 (WHAAGTYRIA…LAAVMMGLIY (129 aa)). The Proton acceptor role is filled by histidine 100. Positions 227-253 (YVNPEGVDGNPDPLKTAHDIRITFSRM) form a cross-link, tryptophyl-tyrosyl-methioninium (Tyr-Met) (with W-99). Histidine 268 is a heme b binding site.

The protein belongs to the peroxidase family. Peroxidase/catalase subfamily. As to quaternary structure, homodimer or homotetramer. Requires heme b as cofactor. Post-translationally, formation of the three residue Trp-Tyr-Met cross-link is important for the catalase, but not the peroxidase activity of the enzyme.

It catalyses the reaction H2O2 + AH2 = A + 2 H2O. The catalysed reaction is 2 H2O2 = O2 + 2 H2O. Functionally, bifunctional enzyme with both catalase and broad-spectrum peroxidase activity. This Picosynechococcus sp. (strain ATCC 27264 / PCC 7002 / PR-6) (Agmenellum quadruplicatum) protein is Catalase-peroxidase.